A 473-amino-acid polypeptide reads, in one-letter code: Bifunctional protein HldE (473 aa).

The ribokinase stretch occupies residues 1-317; sequence MTHGLPHFTS…LQQALHPRAI (317 aa). 195-198 contacts ATP; sequence NLAE. Residue Asp264 is part of the active site. Residues 343–473 are cytidylyltransferase; sequence MTNGCFDILH…SQIIDIIRKN (131 aa).

The protein in the N-terminal section; belongs to the carbohydrate kinase PfkB family. In the C-terminal section; belongs to the cytidylyltransferase family. In terms of assembly, homodimer.

It catalyses the reaction D-glycero-beta-D-manno-heptose 7-phosphate + ATP = D-glycero-beta-D-manno-heptose 1,7-bisphosphate + ADP + H(+). The catalysed reaction is D-glycero-beta-D-manno-heptose 1-phosphate + ATP + H(+) = ADP-D-glycero-beta-D-manno-heptose + diphosphate. The protein operates within nucleotide-sugar biosynthesis; ADP-L-glycero-beta-D-manno-heptose biosynthesis; ADP-L-glycero-beta-D-manno-heptose from D-glycero-beta-D-manno-heptose 7-phosphate: step 1/4. It functions in the pathway nucleotide-sugar biosynthesis; ADP-L-glycero-beta-D-manno-heptose biosynthesis; ADP-L-glycero-beta-D-manno-heptose from D-glycero-beta-D-manno-heptose 7-phosphate: step 3/4. Functionally, catalyzes the phosphorylation of D-glycero-D-manno-heptose 7-phosphate at the C-1 position to selectively form D-glycero-beta-D-manno-heptose-1,7-bisphosphate. Catalyzes the ADP transfer from ATP to D-glycero-beta-D-manno-heptose 1-phosphate, yielding ADP-D-glycero-beta-D-manno-heptose. This is Bifunctional protein HldE from Nitrosococcus oceani (strain ATCC 19707 / BCRC 17464 / JCM 30415 / NCIMB 11848 / C-107).